The primary structure comprises 456 residues: L-seryl-tRNA(Sec) selenium transferase (456 aa).

An N6-(pyridoxal phosphate)lysine modification is found at lysine 288.

The protein belongs to the SelA family. The cofactor is pyridoxal 5'-phosphate.

Its subcellular location is the cytoplasm. The enzyme catalyses L-seryl-tRNA(Sec) + selenophosphate + H(+) = L-selenocysteinyl-tRNA(Sec) + phosphate. It functions in the pathway aminoacyl-tRNA biosynthesis; selenocysteinyl-tRNA(Sec) biosynthesis; selenocysteinyl-tRNA(Sec) from L-seryl-tRNA(Sec) (bacterial route): step 1/1. Its function is as follows. Converts seryl-tRNA(Sec) to selenocysteinyl-tRNA(Sec) required for selenoprotein biosynthesis. This is L-seryl-tRNA(Sec) selenium transferase from Helicobacter hepaticus (strain ATCC 51449 / 3B1).